Reading from the N-terminus, the 100-residue chain is Aspartyl/glutamyl-tRNA(Asn/Gln) amidotransferase subunit C (100 aa).

Belongs to the GatC family. In terms of assembly, heterotrimer of A, B and C subunits.

The enzyme catalyses L-glutamyl-tRNA(Gln) + L-glutamine + ATP + H2O = L-glutaminyl-tRNA(Gln) + L-glutamate + ADP + phosphate + H(+). The catalysed reaction is L-aspartyl-tRNA(Asn) + L-glutamine + ATP + H2O = L-asparaginyl-tRNA(Asn) + L-glutamate + ADP + phosphate + 2 H(+). In terms of biological role, allows the formation of correctly charged Asn-tRNA(Asn) or Gln-tRNA(Gln) through the transamidation of misacylated Asp-tRNA(Asn) or Glu-tRNA(Gln) in organisms which lack either or both of asparaginyl-tRNA or glutaminyl-tRNA synthetases. The reaction takes place in the presence of glutamine and ATP through an activated phospho-Asp-tRNA(Asn) or phospho-Glu-tRNA(Gln). The polypeptide is Aspartyl/glutamyl-tRNA(Asn/Gln) amidotransferase subunit C (Streptococcus agalactiae serotype III (strain NEM316)).